Here is a 1413-residue protein sequence, read N- to C-terminus: Alpha-latrocrustotoxin-Lt1a (1413 aa).

Residues 1–28 (VSIFIFHFSANILVRNSEMKGKRVISKR) constitute a propeptide that is removed on maturation. The segment at 238 to 257 (ALFALFYGTQTFISIMFYLV) is helix H8 is the probable transmembrane region of the tetrameric pore inserted in the target cell membrane. ANK repeat units lie at residues 457-490 (DIHR…QVGA), 494-524 (MGRK…LLNV), 528-557 (NGYT…DVNV), 562-592 (NELT…DVNA), 596-625 (AGFT…GINI), 629-658 (SGLT…KVKL), 664-694 (NGMT…DVNA), 699-729 (KNWT…DIST), 733-762 (QAIT…VVDQ), 766-795 (NGFT…NINA), 799-828 (DGST…NIKA), 832-861 (INQM…SLMN), 866-895 (RDEY…DVNE), 899-928 (DGNT…DFRL), 965-995 (RGKT…TLNE), 996-1026 (DQCS…NPTA), 1031-1072 (NQVS…DINK), 1077-1106 (QQST…DPNK), 1109-1139 (RGDP…DVNT), and 1143-1172 (EQFT…DVNA). Positions 1193–1413 (RSLGRRFFRN…NRPTNVLQIK (221 aa)) are excised as a propeptide.

The protein belongs to the cationic peptide 01 (latrotoxin) family. 01 (alpha-latrocrustotoxin) subfamily. As to quaternary structure, homotetramer in membranes. In terms of tissue distribution, expressed by the venom gland.

Its subcellular location is the secreted. It is found in the target cell membrane. In terms of biological role, crustacean-selective presynaptic neurotoxin that induces neurotransmitter exocytosis. May bind to crustacean neurexin-1 homolog, adhesion G protein-coupled receptor L1 homolog, and receptor-type tyrosine-protein phosphatase S homolog, and induces neurotransmitter exocytosis both by forming tetrameric pores in membranes and signaling via G protein-coupled receptor. This recombinant protein form channels in artificial membrane bilayers, that are stabilized by calcium ions and allow calcium flux at negative membrane potentials. The chain is Alpha-latrocrustotoxin-Lt1a from Latrodectus tredecimguttatus (Mediterranean black widow spider).